The chain runs to 372 residues: Integral membrane protein GPR137B (372 aa).

Topologically, residues 1 to 32 are lumenal; sequence MESPAWDATKNDSLPPTLTPAVPPYVKLGLTT. N-linked (GlcNAc...) asparagine glycosylation occurs at asparagine 11. Residues 33-53 form a helical membrane-spanning segment; the sequence is VYTIFYLLLFAFVYVQLWLVL. The Cytoplasmic portion of the chain corresponds to 54-64; the sequence is HYKHKRFSYQT. Residues 65 to 85 traverse the membrane as a helical segment; it reads VFLFLCLLWASLRAVLFSFYF. The Lumenal portion of the chain corresponds to 86–93; that stretch reads RNFVEANR. The helical transmembrane segment at 94–114 threads the bilayer; the sequence is LGAFTFWLLYCFPVCLQFFTL. Residues 115 to 144 are Cytoplasmic-facing; that stretch reads TLMNLYFARVIYKAKSKYLPELIKYRLPLY. The chain crosses the membrane as a helical span at residues 145 to 165; that stretch reads LAFLVISLLFLVVNLTCAILV. Topologically, residues 166-173 are lumenal; sequence KTDYAETK. Residues 174–194 traverse the membrane as a helical segment; it reads VIVSIRVAINDTLFVLCAVSL. Residues 195–222 lie on the Cytoplasmic side of the membrane; it reads SVCLYKISKMSLAGVYLESKGSSVCQVT. The helical transmembrane segment at 223–243 threads the bilayer; that stretch reads CIGVTVILLYTSRACYNLVVL. The Lumenal portion of the chain corresponds to 244–276; the sequence is SLSDSRYSSFDYDWYNVSDQADLKCKLGDAGYV. Residue asparagine 259 is glycosylated (N-linked (GlcNAc...) asparagine). Residues 277 to 297 form a helical membrane-spanning segment; it reads VFGIILFIWELFPTSLVVYFF. Topologically, residues 298–372 are cytoplasmic; the sequence is RVRNSAQDMT…QTGSLQRDST (75 aa).

This sequence belongs to the GPR137 family.

It is found in the lysosome membrane. Lysosomal integral membrane protein that regulates the localization and activity of mTORC1, a signaling complex promoting cell growth in response to growth factors, energy levels, and amino acids. Interacts with Rag GTPases and increases the lysosomial localization and activity of Rag GTPases and thereby regulates mTORC1 translocation and activity in lysosome. Involved in the regulation of lysosomal morphology and autophagy. Also acts as a negative regulator of osteoclast activity. Its function is as follows. Also acts as a negative regulator of osteoclast activity. This Xenopus laevis (African clawed frog) protein is Integral membrane protein GPR137B (gpr137b).